The sequence spans 975 residues: 26S proteasome non-ATPase regulatory subunit 1 (975 aa).

A disordered region spans residues 272–303 (EKKSTTTTTTTPASDSMEIDIDSGNEKSGGSS). PC repeat units lie at residues 393 to 426 (SAISSLGVINKGHIKESKSLLKTYLPGASVNQTP), 431 to 464 (GSLYALGLIHASHGEEIIDYLVEKLHINNAILHH), 465 to 499 (GASLGLGLAAMATGRDDLYEDLKSVLYNDDAVSGE), 500 to 534 (AAGLAMGLVMLGSGAKKAIEEMLAYAHETQHEKTI), 536 to 569 (SLSMGLAFLMYGKEESADTLIEQMIGDKDPLIRY), 570 to 605 (GGMYAIAFAYCGTGHNDALRKLLHVAVSDGTDSVRR), 606 to 638 (AAVTCIGFVLSRQPEKCPKAIALLAESYNPHVR), 640 to 674 (GAAFALGIACAGTGQRDALEILKSLTTDSVGYVKQ), 675 to 715 (AAWI…DSMS), and 718 to 748 (GAVLAFGVIDAGGRNSTIQLHSPSGHKNMNA). Disordered stretches follow at residues 832–882 (SSRS…KSNP) and 922–975 (PEQL…EFTE). 2 stretches are compositionally biased toward basic and acidic residues: residues 842-880 (DVEKKEKEEKEAKEKEAKEKEEKEAAKAEEKEPLFERKS) and 926-935 (VVKEKPETKQ). A compositionally biased stretch (low complexity) spans 944–961 (TATATASLPNATTTTSPT).

Belongs to the proteasome subunit S1 family.

Its function is as follows. Acts as a regulatory subunit of the 26 proteasome which is involved in the ATP-dependent degradation of ubiquitinated proteins. This Dictyostelium discoideum (Social amoeba) protein is 26S proteasome non-ATPase regulatory subunit 1 (psmD1).